A 255-amino-acid polypeptide reads, in one-letter code: 5-oxoprolinase subunit A (255 aa).

Belongs to the LamB/PxpA family. In terms of assembly, forms a complex composed of PxpA, PxpB and PxpC.

The enzyme catalyses 5-oxo-L-proline + ATP + 2 H2O = L-glutamate + ADP + phosphate + H(+). Its function is as follows. Catalyzes the cleavage of 5-oxoproline to form L-glutamate coupled to the hydrolysis of ATP to ADP and inorganic phosphate. The sequence is that of 5-oxoprolinase subunit A from Clostridium kluyveri (strain ATCC 8527 / DSM 555 / NBRC 12016 / NCIMB 10680 / K1).